A 348-amino-acid chain; its full sequence is Casein kinase II subunit alpha (348 aa).

The Protein kinase domain occupies 55–340 (YEIVRKIGRG…PLEAMEHPFF (286 aa)). Residues 61–69 (IGRGKFSEV) and Lys84 contribute to the ATP site. The active-site Proton acceptor is the Asp172.

The protein belongs to the protein kinase superfamily. Ser/Thr protein kinase family. CK2 subfamily. Tetramer of two alpha and two beta chains.

The protein localises to the cytoplasm. It carries out the reaction L-seryl-[protein] + ATP = O-phospho-L-seryl-[protein] + ADP + H(+). It catalyses the reaction L-threonyl-[protein] + ATP = O-phospho-L-threonyl-[protein] + ADP + H(+). Casein kinases are operationally defined by their preferential utilization of acidic proteins such as caseins as substrates. The alpha chain contains the catalytic site. In Theileria annulata, this protein is Casein kinase II subunit alpha.